The sequence spans 234 residues: Iron-sulfur cluster co-chaperone protein HscB (234 aa).

A divalent metal cation is bound by residues Cys-40, Cys-43, Cys-57, and Cys-60. The J domain occupies 71-143 (DYFSLMNCNR…LTRGLYLLKL (73 aa)).

This sequence belongs to the HscB family. As to quaternary structure, interacts with ISCU and HSPA9 to form an iron-sulfur transfer complex. Interacts with SDHAF1 (via the first LYR motif); the interaction recruits the iron-sulfur transfer complex composed of HSC20, HSPA9 and ISCU and mediates the incorporation of iron-sulfur clusters into SDHB which also interacts with HSC20. Interacts with the cytoplasmic form of ISCU and with CIA complex member CIAO1 (via LYR motif). In terms of assembly, homodimer. Interacts with ISCU (cytoplasmic form); this interaction stabilizes the (Fe-S) clusters on ISCU. Interacts with the CIA complex member CIAO1 (via LYR motif).

Its subcellular location is the cytoplasm. The protein localises to the mitochondrion. It functions in the pathway cofactor biosynthesis; iron-sulfur cluster biosynthesis. Functionally, acts as a co-chaperone in iron-sulfur cluster assembly in mitochondria. Required for incorporation of iron-sulfur clusters into SDHB, the iron-sulfur protein subunit of succinate dehydrogenase that is involved in complex II of the mitochondrial electron transport chain. Recruited to SDHB by interaction with SDHAF1 which first binds SDHB and then recruits the iron-sulfur transfer complex formed by HSC20, HSPA9 and ISCU through direct binding to HSC20. Plays an essential role in hematopoiesis. Acts as a co-chaperone in iron-sulfur cluster assembly in the cytoplasm. Also mediates complex formation between components of the cytosolic iron-sulfur biogenesis pathway and the CIA targeting complex composed of CIAO1, DIPK1B/FAM69B and MMS19 by binding directly to the scaffold protein ISCU and to CIAO1. This facilitates iron-sulfur cluster insertion into a number of cytoplasmic and nuclear proteins including POLD1, ELP3, DPYD and PPAT. This chain is Iron-sulfur cluster co-chaperone protein HscB, found in Mus musculus (Mouse).